The chain runs to 600 residues: Elongation factor 4 (600 aa).

A tr-type G domain is found at 5 to 187 (SRIRNFSIIA…DLIKKIPPPK (183 aa)). Residues 17 to 22 (DHGKST) and 134 to 137 (NKMD) each bind GTP.

It belongs to the TRAFAC class translation factor GTPase superfamily. Classic translation factor GTPase family. LepA subfamily.

The protein resides in the cell inner membrane. It catalyses the reaction GTP + H2O = GDP + phosphate + H(+). In terms of biological role, required for accurate and efficient protein synthesis under certain stress conditions. May act as a fidelity factor of the translation reaction, by catalyzing a one-codon backward translocation of tRNAs on improperly translocated ribosomes. Back-translocation proceeds from a post-translocation (POST) complex to a pre-translocation (PRE) complex, thus giving elongation factor G a second chance to translocate the tRNAs correctly. Binds to ribosomes in a GTP-dependent manner. This Marinobacter nauticus (strain ATCC 700491 / DSM 11845 / VT8) (Marinobacter aquaeolei) protein is Elongation factor 4.